The following is a 763-amino-acid chain: Xaa-Pro dipeptidyl-peptidase (763 aa).

Residues Ser349, Asp469, and His499 each act as charge relay system in the active site.

This sequence belongs to the peptidase S15 family. Homodimer.

Its subcellular location is the cytoplasm. It catalyses the reaction Hydrolyzes Xaa-Pro-|- bonds to release unblocked, N-terminal dipeptides from substrates including Ala-Pro-|-p-nitroanilide and (sequentially) Tyr-Pro-|-Phe-Pro-|-Gly-Pro-|-Ile.. Functionally, removes N-terminal dipeptides sequentially from polypeptides having unsubstituted N-termini provided that the penultimate residue is proline. This Streptococcus macedonicus (Streptococcus gallolyticus macedonicus) protein is Xaa-Pro dipeptidyl-peptidase.